The primary structure comprises 334 residues: Porphobilinogen deaminase (334 aa).

C250 bears the S-(dipyrrolylmethanemethyl)cysteine mark.

This sequence belongs to the HMBS family. As to quaternary structure, monomer. Requires dipyrromethane as cofactor.

It carries out the reaction 4 porphobilinogen + H2O = hydroxymethylbilane + 4 NH4(+). The protein operates within porphyrin-containing compound metabolism; protoporphyrin-IX biosynthesis; coproporphyrinogen-III from 5-aminolevulinate: step 2/4. In terms of biological role, tetrapolymerization of the monopyrrole PBG into the hydroxymethylbilane pre-uroporphyrinogen in several discrete steps. The polypeptide is Porphobilinogen deaminase (Cutibacterium acnes (strain DSM 16379 / KPA171202) (Propionibacterium acnes)).